Consider the following 328-residue polypeptide: Malate dehydrogenase (328 aa).

11 to 17 (GAAGQIG) provides a ligand contact to NAD(+). Substrate is bound by residues arginine 94 and arginine 100. NAD(+)-binding positions include asparagine 107, glutamine 114, and 131-133 (VGN). 2 residues coordinate substrate: asparagine 133 and arginine 164. Residue histidine 189 is the Proton acceptor of the active site.

The protein belongs to the LDH/MDH superfamily. MDH type 2 family.

It carries out the reaction (S)-malate + NAD(+) = oxaloacetate + NADH + H(+). Functionally, catalyzes the reversible oxidation of malate to oxaloacetate. This Xylella fastidiosa (strain M23) protein is Malate dehydrogenase.